Here is a 251-residue protein sequence, read N- to C-terminus: RING-H2 finger protein ATL10 (251 aa).

Residues 59–79 (MMLLSILICGIICCLGLHYII) traverse the membrane as a helical segment. The segment at 135 to 177 (CVICLSDFVSGEQLRLLPKCNHGFHVRCIDKWLQQHLTCPKCR) adopts an RING-type; atypical zinc-finger fold.

The protein belongs to the RING-type zinc finger family. ATL subfamily.

The protein resides in the membrane. It catalyses the reaction S-ubiquitinyl-[E2 ubiquitin-conjugating enzyme]-L-cysteine + [acceptor protein]-L-lysine = [E2 ubiquitin-conjugating enzyme]-L-cysteine + N(6)-ubiquitinyl-[acceptor protein]-L-lysine.. It functions in the pathway protein modification; protein ubiquitination. This is RING-H2 finger protein ATL10 (ATL10) from Arabidopsis thaliana (Mouse-ear cress).